Reading from the N-terminus, the 91-residue chain is uncharacterized protein (91 aa).

Residues 71–91 (EANDRPSKKCGSGNLRVEKLV) are disordered.

This is an uncharacterized protein from Archaeoglobus fulgidus (strain ATCC 49558 / DSM 4304 / JCM 9628 / NBRC 100126 / VC-16).